The following is a 255-amino-acid chain: ATP synthase subunit a 2 (255 aa).

Transmembrane regions (helical) follow at residues 26–46 (SINI…IGVF), 86–106 (LIGP…SIDL), 131–151 (DVNV…GYTL), 205–225 (MIFI…SVPW), and 230–250 (ILIV…YLAM).

It belongs to the ATPase A chain family. As to quaternary structure, F-type ATPases have 2 components, CF(1) - the catalytic core - and CF(0) - the membrane proton channel. CF(1) has five subunits: alpha(3), beta(3), gamma(1), delta(1), epsilon(1). CF(0) has three main subunits: a(1), b(2) and c(9-12). The alpha and beta chains form an alternating ring which encloses part of the gamma chain. CF(1) is attached to CF(0) by a central stalk formed by the gamma and epsilon chains, while a peripheral stalk is formed by the delta and b chains.

It localises to the cell inner membrane. Key component of the proton channel; it plays a direct role in the translocation of protons across the membrane. This Photobacterium profundum (strain SS9) protein is ATP synthase subunit a 2.